A 310-amino-acid chain; its full sequence is Methionyl-tRNA formyltransferase (310 aa).

108–111 (SLLP) provides a ligand contact to (6S)-5,6,7,8-tetrahydrofolate.

The protein belongs to the Fmt family.

The enzyme catalyses L-methionyl-tRNA(fMet) + (6R)-10-formyltetrahydrofolate = N-formyl-L-methionyl-tRNA(fMet) + (6S)-5,6,7,8-tetrahydrofolate + H(+). Functionally, attaches a formyl group to the free amino group of methionyl-tRNA(fMet). The formyl group appears to play a dual role in the initiator identity of N-formylmethionyl-tRNA by promoting its recognition by IF2 and preventing the misappropriation of this tRNA by the elongation apparatus. The polypeptide is Methionyl-tRNA formyltransferase (Fusobacterium nucleatum subsp. nucleatum (strain ATCC 25586 / DSM 15643 / BCRC 10681 / CIP 101130 / JCM 8532 / KCTC 2640 / LMG 13131 / VPI 4355)).